Here is a 187-residue protein sequence, read N- to C-terminus: Signal peptidase complex catalytic subunit SEC11 (187 aa).

Residues 1–18 (MLSSLSPYMANPRNTLSQ) lie on the Cytoplasmic side of the membrane. Residues 19-39 (VLNFGLVLSSAFMVWKALSVI) traverse the membrane as a helical; Signal-anchor for type II membrane protein segment. Residues 40 to 187 (TNSASPVVVV…MGLMVMLQRE (148 aa)) are Lumenal-facing. Active-site charge relay system residues include Ser53 and His92. N-linked (GlcNAc...) asparagine glycosylation is present at Asn125. Asp129 acts as the Charge relay system in catalysis. A C-terminal short (CTS) helix region spans residues 173–184 (VLLGFMGLMVML).

It belongs to the peptidase S26B family. In terms of assembly, component of the signal peptidase complex (SPC) composed of a catalytic subunit SEC11 and three accessory subunits SPC1, SPC2 and SPC3. The complex induces a local thinning of the ER membrane which is used to measure the length of the signal peptide (SP) h-region of protein substrates. This ensures the selectivity of the complex towards h-regions shorter than 18-20 amino acids. SPC associates with the translocon complex.

It is found in the endoplasmic reticulum membrane. It carries out the reaction Cleavage of hydrophobic, N-terminal signal or leader sequences from secreted and periplasmic proteins.. Catalytic component of the signal peptidase complex (SPC) which catalyzes the cleavage of N-terminal signal sequences from nascent proteins as they are translocated into the lumen of the endoplasmic reticulum. Specifically cleaves N-terminal signal peptides that contain a hydrophobic alpha-helix (h-region) shorter than 18-20 amino acids. The chain is Signal peptidase complex catalytic subunit SEC11 (SEC11) from Ajellomyces capsulatus (strain NAm1 / WU24) (Darling's disease fungus).